The following is a 31-amino-acid chain: Cyclotide vibi-F (31 aa).

Positions 1 to 31 (GTIPCGESCVFIPCLTSALGCSCKSKVCYKN) form a cross-link, cyclopeptide (Gly-Asn). 3 cysteine pairs are disulfide-bonded: cysteine 5/cysteine 21, cysteine 9/cysteine 23, and cysteine 14/cysteine 28.

Post-translationally, this is a cyclic peptide.

Probably participates in a plant defense mechanism. In Viola biflora (Yellow wood violet), this protein is Cyclotide vibi-F.